A 249-amino-acid chain; its full sequence is Elongator complex protein 6 homolog (249 aa).

It belongs to the ELP6 family. Component of the elongator complex.

It localises to the cytoplasm. Its subcellular location is the nucleus. It participates in tRNA modification; 5-methoxycarbonylmethyl-2-thiouridine-tRNA biosynthesis. Component of the elongator complex which is required for multiple tRNA modifications, including mcm5U (5-methoxycarbonylmethyl uridine), mcm5s2U (5-methoxycarbonylmethyl-2-thiouridine), and ncm5U (5-carbamoylmethyl uridine). The elongator complex catalyzes formation of carboxymethyluridine in the wobble base at position 34 in tRNAs. In Schizosaccharomyces pombe (strain 972 / ATCC 24843) (Fission yeast), this protein is Elongator complex protein 6 homolog.